Consider the following 294-residue polypeptide: N-acetylmuramic acid 6-phosphate etherase (294 aa).

The 164-residue stretch at 54 to 217 (VIKSFEEEGR…STASMIGVGK (164 aa)) folds into the SIS domain. The active-site Proton donor is Glu82. Glu113 is an active-site residue.

Belongs to the GCKR-like family. MurNAc-6-P etherase subfamily. As to quaternary structure, homodimer.

The enzyme catalyses N-acetyl-D-muramate 6-phosphate + H2O = N-acetyl-D-glucosamine 6-phosphate + (R)-lactate. Its pathway is amino-sugar metabolism; N-acetylmuramate degradation. In terms of biological role, specifically catalyzes the cleavage of the D-lactyl ether substituent of MurNAc 6-phosphate, producing GlcNAc 6-phosphate and D-lactate. This Bacillus cereus (strain ATCC 14579 / DSM 31 / CCUG 7414 / JCM 2152 / NBRC 15305 / NCIMB 9373 / NCTC 2599 / NRRL B-3711) protein is N-acetylmuramic acid 6-phosphate etherase.